A 762-amino-acid polypeptide reads, in one-letter code: Ribosome-releasing factor 2, mitochondrial (762 aa).

The transit peptide at 1 to 35 directs the protein to the mitochondrion; it reads MLLSLTFPVLRGCTGHLVNRSLQAPRWRVTWKRSY. Residues 54–341 form the tr-type G domain; that stretch reads SKIRNIGIMA…AITAYLPAPN (288 aa). GTP is bound by residues 63–70, 127–131, and 181–184; these read AHIDAGKT, DTPGH, and NKMD.

It belongs to the TRAFAC class translation factor GTPase superfamily. Classic translation factor GTPase family. EF-G/EF-2 subfamily.

It localises to the mitochondrion. It catalyses the reaction GTP + H2O = GDP + phosphate + H(+). Its function is as follows. Mitochondrial GTPase that mediates the disassembly of ribosomes from messenger RNA at the termination of mitochondrial protein biosynthesis. Acts in collaboration with mrrf. GTP hydrolysis follows the ribosome disassembly and probably occurs on the ribosome large subunit. Not involved in the GTP-dependent ribosomal translocation step during translation elongation. The protein is Ribosome-releasing factor 2, mitochondrial (gfm2) of Danio rerio (Zebrafish).